The following is a 449-amino-acid chain: UDP-N-acetylmuramate--L-alanine ligase (449 aa).

118–124 (GTHGKTT) lines the ATP pocket.

Belongs to the MurCDEF family.

The protein resides in the cytoplasm. The enzyme catalyses UDP-N-acetyl-alpha-D-muramate + L-alanine + ATP = UDP-N-acetyl-alpha-D-muramoyl-L-alanine + ADP + phosphate + H(+). It functions in the pathway cell wall biogenesis; peptidoglycan biosynthesis. Functionally, cell wall formation. The protein is UDP-N-acetylmuramate--L-alanine ligase of Flavobacterium johnsoniae (strain ATCC 17061 / DSM 2064 / JCM 8514 / BCRC 14874 / CCUG 350202 / NBRC 14942 / NCIMB 11054 / UW101) (Cytophaga johnsonae).